A 288-amino-acid polypeptide reads, in one-letter code: T-cell-interacting, activating receptor on myeloid cells protein 1 (288 aa).

The signal sequence occupies residues Met1–Gly16. The Extracellular segment spans residues Gln17–Arg258. 2 Ig-like C2-type domains span residues Pro27 to Asn113 and Pro124 to Ser217. 2 disulfide bridges follow: Cys49–Cys97 and Cys146–Cys196. Asn74 and Asn185 each carry an N-linked (GlcNAc...) asparagine glycan. The helical transmembrane segment at Val259–Ser279 threads the bilayer. At Glu280–Trp288 the chain is on the cytoplasmic side.

As to quaternary structure, interacts with Fc receptor gamma chain FCER1G. Post-translationally, N-glycosylated. As to expression, expressed in lung, uterus, lymph nodes, spleen, thymus and bone marrow. Expressed in bone marrow CD11b(+)Gr-1(+) granulocyte precursors and mature neutrophils.

The protein resides in the cell membrane. In terms of biological role, may act as receptor. Negatively regulates TCR-mediated CD4(+) T cell proliferation and activation, possibly by binding an unknown ligand on the T cell surface. Enhances Toll-like receptor-mediated production of pro-inflammatory cytokines by macrophages and neutrophils. This chain is T-cell-interacting, activating receptor on myeloid cells protein 1 (Tarm1), found in Mus musculus (Mouse).